Reading from the N-terminus, the 2151-residue chain is Calpain-type cysteine protease DEK1 (2151 aa).

An N-terminal signal peptide occupies residues 1–32 (MEGDERGVLLACVISGTLFTVFGSGSFWILWA). Topologically, residues 33 to 69 (VNWRPWRLYSWIFARKWPKVLQGPQLDILCGVLSLFA) are extracellular. A helical transmembrane segment spans residues 70–90 (WIVVVSPIAILIGWGSWLIVI). Residues 91-94 (LDRH) lie on the Cytoplasmic side of the membrane. Residues 95–115 (IIGLAIIMAGTALLLAFYSIM) traverse the membrane as a helical segment. Residues 116–126 (LWWRTQWQSSR) lie on the Extracellular side of the membrane. Residues 127–147 (AVALLLLLGVALLCAYELCAV) form a helical membrane-spanning segment. At 148 to 163 (YVTAGAHASQQYSPSG) the chain is on the cytoplasmic side. Residues 164–184 (FFFGVSAIALAINMLFICRMV) traverse the membrane as a helical segment. Topologically, residues 185-235 (FNGNGLDVDEYVRRAYKFAYSDCIEVGPVACLPEPPDPNELYPRQTSRASH) are extracellular. Residues 236-256 (LGLLYLGSLVVLLAYSVLYGL) form a helical membrane-spanning segment. Residues 257 to 263 (TARESRW) lie on the Cytoplasmic side of the membrane. A helical transmembrane segment spans residues 264–284 (LGGITSAAVIVLDWNIGACLY). At 285–293 (GFKLLQNRV) the chain is on the extracellular side. Residues 294–314 (LALFVAGISRLFLICFGIHYW) traverse the membrane as a helical segment. At 315–319 (YLGHC) the chain is on the cytoplasmic side. The helical transmembrane segment at 320 to 340 (ISYIFVASVLSGAAVSRHLSI) threads the bilayer. The Extracellular segment spans residues 341–615 (TDPSAARRDA…LLLHHVAGTP (275 aa)). Disordered regions lie at residues 363-393 (RRKE…GHTG) and 405-442 (CTAD…SCRS). Low complexity predominate over residues 369 to 388 (SSSSSSDGCGSSIKRSSSID). Over residues 405-420 (CTADNLTRTGSSQEGI) the composition is skewed to polar residues. A compositionally biased stretch (low complexity) spans 430 to 442 (RPSLGLRSSSCRS). A helical membrane pass occupies residues 616–636 (ERAWGLFSLVFILETIIVAIF). Over 637–652 (RPKTITIINSSHQQFE) the chain is Cytoplasmic. A helical transmembrane segment spans residues 653-673 (FGFSVLLLSPVVCSIMAFLRS). At 674–686 (LQVEEMALTSKSR) the chain is on the extracellular side. A helical membrane pass occupies residues 687–707 (KYGFVAWLLSTSVGLSLSFLS). Residues 708 to 711 (KSSV) lie on the Cytoplasmic side of the membrane. A helical transmembrane segment spans residues 712-732 (LLGISLTVPLMAACLSIAVPI). The Extracellular segment spans residues 733-760 (WMHNGYQFWVPQLSCGDQARDLRSPRIK). A helical membrane pass occupies residues 761–782 (GFILWICVVLFAGSVISLGAII). Residues 783-813 (SAKPLDDLKYKLFSARENNVTSPYTSSVYLG) lie on the Cytoplasmic side of the membrane. The helical transmembrane segment at 814 to 834 (WAMSSGIALVVTAILPIVSWF) threads the bilayer. The Extracellular segment spans residues 835-844 (ATYRFSHSSA). Residues 845-865 (VCLMIFSVVLVAFCGTSYLEV) form a helical membrane-spanning segment. The Cytoplasmic segment spans residues 866–878 (VKSRDDQLPTKGD). The chain crosses the membrane as a helical span at residues 879–899 (FLAALLPLACIPALLSLCCGM). Residues 900 to 912 (VKWKDDCWILSRG) lie on the Extracellular side of the membrane. The helical transmembrane segment at 913 to 933 (VYVFFSIGLLLLFGAIAAVIA) threads the bilayer. The Cytoplasmic segment spans residues 934-936 (VKP). The chain crosses the membrane as a helical span at residues 937 to 957 (WTIGVSFLLVLFLMVVTIGVI). Topologically, residues 958 to 971 (HLWASNNFYLTRKQ) are extracellular. The chain crosses the membrane as a helical span at residues 972 to 992 (TSFVCFLALLLGLAAFLLGWH). The Cytoplasmic portion of the chain corresponds to 993–1006 (QDKAFAGASVGYFT). A helical membrane pass occupies residues 1007-1027 (FLSLLAGRALAVLLSPPIVVY). The Extracellular portion of the chain corresponds to 1028–1050 (SPRVLPVYVYDAHADCGKNVSAA). A helical transmembrane segment spans residues 1051-1071 (FLVLYGIALATEGWGVVASLI). The Cytoplasmic segment spans residues 1072 to 2151 (IYPPFAGAAV…TKASIVLEAL (1080 aa)). Calpain catalytic domains follow at residues 1407–1600 (SGKH…DMID) and 1695–1997 (QFTD…CRVY). Residues C1761, H1919, and N1939 contribute to the active site.

This sequence belongs to the peptidase C2 family. In terms of processing, autocatalytic proteolytic cleavage leading to the production of mainly cytoplasmic localized subproducts of about 85 and 120 kDa. Mostly expressed in meristems and organ primordia. Expressed at low levels in young and germinating seeds at 10 ppm and in seedling roots at 67 ppm. Present in most tissues at a low level.

Its subcellular location is the cell membrane. It is found in the endosome membrane. The protein localises to the endoplasmic reticulum membrane. The protein resides in the cytoplasm. Functionally, essential protease involved in epiderm development. Required for aleurone cell development in the endosperm probably by maintaining and restricting the aleurone and embryonic epidermal L1 cell-layer fates as well as meristems organization. Involved in the maintenance of adaxial/abaxial axis information in developing leaves, probably by regulating cell proliferation and expansion. Does not need calcium ions to be active. Required for the formation of giant cells in sepals by determining cell fate and promoting endoreplication. This chain is Calpain-type cysteine protease DEK1, found in Arabidopsis thaliana (Mouse-ear cress).